Consider the following 343-residue polypeptide: Cell division protein ZipA (343 aa).

Over 1–4 (MDLN) the chain is Periplasmic. Residues 5 to 25 (TILIILGILALIGLVAHGIWS) traverse the membrane as a helical segment. The Cytoplasmic portion of the chain corresponds to 26–343 (NRREKSQYFD…MAEAAYLARV (318 aa)). The disordered stretch occupies residues 39–98 (AFHRNPQSTGRPSAQASQPMTPNFAQPAKETEQIRQTYQEPQVRQMSSSPEQQTRPTAQA). Polar residues-rich tracts occupy residues 43–62 (NPQSTGRPSAQASQPMTPNF) and 72–95 (IRQTYQEPQVRQMSSSPEQQTRPT).

Belongs to the ZipA family. As to quaternary structure, interacts with FtsZ via their C-terminal domains.

It localises to the cell inner membrane. Its function is as follows. Essential cell division protein that stabilizes the FtsZ protofilaments by cross-linking them and that serves as a cytoplasmic membrane anchor for the Z ring. Also required for the recruitment to the septal ring of downstream cell division proteins. The chain is Cell division protein ZipA from Actinobacillus succinogenes (strain ATCC 55618 / DSM 22257 / CCUG 43843 / 130Z).